A 284-amino-acid polypeptide reads, in one-letter code: 2-dehydro-3-deoxyphosphooctonate aldolase (284 aa).

It belongs to the KdsA family.

The protein localises to the cytoplasm. The catalysed reaction is D-arabinose 5-phosphate + phosphoenolpyruvate + H2O = 3-deoxy-alpha-D-manno-2-octulosonate-8-phosphate + phosphate. Its pathway is carbohydrate biosynthesis; 3-deoxy-D-manno-octulosonate biosynthesis; 3-deoxy-D-manno-octulosonate from D-ribulose 5-phosphate: step 2/3. It participates in bacterial outer membrane biogenesis; lipopolysaccharide biosynthesis. In Haemophilus influenzae (strain ATCC 51907 / DSM 11121 / KW20 / Rd), this protein is 2-dehydro-3-deoxyphosphooctonate aldolase (kdsA).